A 246-amino-acid polypeptide reads, in one-letter code: MAGHSKWANTRHRKAAQDAKRGKIFTKIIRELVTAAKLGGGDPDANPRLRAAVDKALANNMTRDTLNRAIARGVGGDEDSNMETIIYEGYGPGGTAIMIECLSDNRNRTVAEVRHAFSKCGGNLGTDGSVAYLFSKKGVISFEKGDEDTIMEAALEAGAEDVVTYDDGAIDVYTAWEEMGKVRDALEEAGLKADSAEVSMIPSTKADMDAETAPKLLRLIDMLEDCDDVQEVYHNGEISDEVAATL.

The interval 1–20 (MAGHSKWANTRHRKAAQDAK) is disordered.

This sequence belongs to the TACO1 family.

It is found in the cytoplasm. The chain is Probable transcriptional regulatory protein YebC from Salmonella choleraesuis (strain SC-B67).